The primary structure comprises 365 residues: Transcription factor TCP2 (365 aa).

Residues 42-100 (GKDRHSKVLTSKGPRDRRVRLSVSTALQFYDLQDRLGYDQPSKAVEWLIKAAEDSISEL) form the TCP domain. Over residues 130–150 (KSACSSNSDTSKNSSGLSLSR) the composition is skewed to low complexity. Disordered regions lie at residues 130–202 (KSAC…SAPS) and 220–245 (QTHF…HPHH). The 22-residue stretch at 151–172 (SELRDKARERARERTAKETKER) folds into the R domain. The segment covering 151 to 176 (SELRDKARERARERTAKETKERDHNH) has biased composition (basic and acidic residues). The span at 177–202 (TSFTDLLNSGSDPVNSNRQWMASAPS) shows a compositional bias: polar residues.

In terms of assembly, interacts with SPL. Interacts with CRY1. Expressed in cotyledons, particularly in the vascular region, in leaves, roots, buds, flowers and immature siliques.

The protein resides in the nucleus. Plays a pivotal role in the control of morphogenesis of shoot organs by negatively regulating the expression of boundary-specific genes such as CUC genes, probably through the induction of miRNA (e.g. miR164). Participates in ovule development. Promotes light-regulated transcription of CHS, CAB, HYH and HY5. Positively regulates photomorphogenesis (e.g. hypocotyl elongation inhibition and cotyledon opening in response to blue light). The sequence is that of Transcription factor TCP2 from Arabidopsis thaliana (Mouse-ear cress).